The primary structure comprises 178 residues: Nascent polypeptide-associated complex subunit alpha (178 aa).

Residues 20–84 form the NAC-A/B domain; the sequence is SKNEKKAREL…AKVDDMNKRI (65 aa). Low complexity predominate over residues 87–104; it reads AQAQQEQQEALTKAAADA. The segment at 87-142 is disordered; that stretch reads AQAQQEQQEALTKAAADAETADKSPESITNDLQNASLEDKTVEEDEGEVDETGLDS. The segment covering 112 to 122 has biased composition (polar residues); that stretch reads ESITNDLQNAS. Acidic residues predominate over residues 127–139; that stretch reads TVEEDEGEVDETG. Positions 140–178 constitute a UBA domain; that stretch reads LDSKDIEIIVEQTQVSRAKAVKALRAHKGDMVNAIMELS.

This sequence belongs to the NAC-alpha family. As to quaternary structure, part of the nascent polypeptide-associated complex (NAC), consisting of EGD2 and EGD1. NAC associates with ribosomes via EGD1.

It is found in the cytoplasm. The protein localises to the nucleus. Component of the nascent polypeptide-associated complex (NAC), a dynamic component of the ribosomal exit tunnel, protecting the emerging polypeptides from interaction with other cytoplasmic proteins to ensure appropriate nascent protein targeting. The NAC complex also promotes mitochondrial protein import by enhancing productive ribosome interactions with the outer mitochondrial membrane and blocks the inappropriate interaction of ribosomes translating non-secretory nascent polypeptides with translocation sites in the membrane of the endoplasmic reticulum. EGD2 may also be involved in transcription regulation. This chain is Nascent polypeptide-associated complex subunit alpha (EGD2), found in Meyerozyma guilliermondii (strain ATCC 6260 / CBS 566 / DSM 6381 / JCM 1539 / NBRC 10279 / NRRL Y-324) (Yeast).